The following is a 753-amino-acid chain: Striatin-4 (753 aa).

Positions 10–65 (VAAAASSCRPLGSGAGPGPTGAAPVSAPAPGPGPAGKGGGGGGSPGPTAGPEPLSL) are disordered. Gly residues predominate over residues 43–54 (PAGKGGGGGGSP). Ser-53 carries the phosphoserine modification. The stretch at 69–136 (LHFIQHEWAR…QERAKYHKLK (68 aa)) forms a coiled coil. Residues 71 to 79 (FIQHEWARF) are caveolin-binding. A calmodulin-binding region spans residues 165–182 (ENSPLVWKEGRQLLRQYL). Ser-206 bears the Phosphoserine mark. 3 disordered regions span residues 213–232 (VEPSEGAPRAPPGPAGLSGG), 271–345 (CEDE…SPHE), and 363–382 (VDGLPPKVTGPPPGTPQPRP). Acidic residues-rich tracts occupy residues 271-283 (CEDEDSDEDDELD) and 302-317 (EMEDEDEEDDSEDAIN). Ser-276 is subject to Phosphoserine. Over residues 332 to 345 (PDPRRCTVDGSPHE) the composition is skewed to basic and acidic residues. Positions 370–380 (VTGPPPGTPQP) are enriched in pro residues. 7 WD repeats span residues 436 to 475 (SHYDGIRSLAFHHSQSALLTASEDGTLKLWNLQKAVTAKK), 489 to 528 (AHRGPVLAVAMGSNSEYCYSGGADACIHSWKIPDLSMDPY), 542 to 581 (GHGDAVWGLAFSPTSQRLASCSADGTVRIWDPSSSSPACL), 587 to 628 (ASEH…ALLT), 635 to 674 (SGPTQINQVVSHPNQPLTITAHDDRGIRFLDNRTGKPVHS), 677 to 716 (AHLDAVTCLAVDPNGAFLMSGSHDCSLRLWSLDNKTCVQE), and 723 to 753 (KHEEAIHAVACHPSKALIASAGADALAKVFV).

This sequence belongs to the WD repeat striatin family. In terms of assembly, part of the core of STRIPAK complexes composed of PP2A catalytic and scaffolding subunits, the striatins (PP2A regulatory subunits), the striatin-associated proteins MOB4, STRIP1 and STRIP2, PDCD10 and members of the STE20 kinases, such as STK24 and STK26. Interacts with CTTNBP2NL.

The protein resides in the cytoplasm. Its function is as follows. Calmodulin-binding scaffolding protein which is the center of the striatin-interacting phosphatase and kinase (STRIPAK) complexes. STRIPAK complexes have critical roles in protein (de)phosphorylation and are regulators of multiple signaling pathways including Hippo, MAPK, nuclear receptor and cytoskeleton remodeling. Different types of STRIPAK complexes are involved in a variety of biological processes such as cell growth, differentiation, apoptosis, metabolism and immune regulation. Key regulator of the expanded Hippo signaling pathway by interacting and allowing the inhibition of MAP4K kinases by the STRIPAK complex. In Homo sapiens (Human), this protein is Striatin-4.